Reading from the N-terminus, the 406-residue chain is Cysteine desulfurase (406 aa).

Lys226 is modified (N6-(pyridoxal phosphate)lysine). Cys364 serves as the catalytic Cysteine persulfide intermediate.

It belongs to the class-V pyridoxal-phosphate-dependent aminotransferase family. Csd subfamily. As to quaternary structure, homodimer. Interacts with SufE and the SufBCD complex composed of SufB, SufC and SufD. The interaction with SufE is required to mediate the direct transfer of the sulfur atom from the S-sulfanylcysteine. It depends on pyridoxal 5'-phosphate as a cofactor.

The protein localises to the cytoplasm. It carries out the reaction (sulfur carrier)-H + L-cysteine = (sulfur carrier)-SH + L-alanine. The catalysed reaction is L-selenocysteine + AH2 = hydrogenselenide + L-alanine + A + H(+). Its pathway is cofactor biosynthesis; iron-sulfur cluster biosynthesis. Its function is as follows. Cysteine desulfurases mobilize the sulfur from L-cysteine to yield L-alanine, an essential step in sulfur metabolism for biosynthesis of a variety of sulfur-containing biomolecules. Component of the suf operon, which is activated and required under specific conditions such as oxidative stress and iron limitation. Acts as a potent selenocysteine lyase in vitro, that mobilizes selenium from L-selenocysteine. Selenocysteine lyase activity is however unsure in vivo. The chain is Cysteine desulfurase from Yersinia pestis bv. Antiqua (strain Angola).